Reading from the N-terminus, the 858-residue chain is Leucine--tRNA ligase (858 aa).

The 'HIGH' region motif lies at 42–52 (PYPSGRLHMGH). A 'KMSKS' region motif is present at residues 618–622 (KMSKS). Residue lysine 621 coordinates ATP.

Belongs to the class-I aminoacyl-tRNA synthetase family.

The protein localises to the cytoplasm. It carries out the reaction tRNA(Leu) + L-leucine + ATP = L-leucyl-tRNA(Leu) + AMP + diphosphate. The chain is Leucine--tRNA ligase from Photobacterium profundum (strain SS9).